A 492-amino-acid chain; its full sequence is UPF0236 protein TTE1650/TTE2708 (492 aa).

This sequence belongs to the UPF0236 family.

The polypeptide is UPF0236 protein TTE1650/TTE2708 (Caldanaerobacter subterraneus subsp. tengcongensis (strain DSM 15242 / JCM 11007 / NBRC 100824 / MB4) (Thermoanaerobacter tengcongensis)).